A 197-amino-acid chain; its full sequence is MLHFSGSLTRLVGELKKLPGVGEKSAQRLAFHLLKHPSNIEALAQSLLQVGERVHLCSVCFAITEDDPCWICSGERDSGTICVVEEPQDLLALERSRAFSGRYHVLQGALSPLNGVTPKDLRIAELMQRLQGGEVREVLIATNFTVEGEATALYLTRLIKPLSIKVTRLAHGIPVGSDLEYVDAATVQRAVEGRSEL.

The C4-type zinc finger occupies 57–72; sequence CSVCFAITEDDPCWIC. The Toprim domain maps to 79–174; the sequence is GTICVVEEPQ…KVTRLAHGIP (96 aa).

It belongs to the RecR family.

Functionally, may play a role in DNA repair. It seems to be involved in an RecBC-independent recombinational process of DNA repair. It may act with RecF and RecO. The protein is Recombination protein RecR of Citrifermentans bemidjiense (strain ATCC BAA-1014 / DSM 16622 / JCM 12645 / Bem) (Geobacter bemidjiensis).